A 133-amino-acid polypeptide reads, in one-letter code: Sigma factor-binding protein Crl (133 aa).

The essential for activity stretch occupies residues 99–122 (TLDDFYVKLTKFVKEDCQLDLQAS).

The protein belongs to the Crl family.

It is found in the cytoplasm. Its function is as follows. Binds to the sigma-S subunit of RNA polymerase, activating expression of sigma-S-regulated genes. Stimulates RNA polymerase holoenzyme formation and may bind to several other sigma factors, such as sigma-70 and sigma-32. This is Sigma factor-binding protein Crl from Photobacterium profundum (strain SS9).